We begin with the raw amino-acid sequence, 94 residues long: Ammonia regulation of amino acid uptake protein (94 aa).

Repeats lie at residues 48-57 (HHQIRRRTHQ) and 58-67 (HHQIRRRTHQ).

Its function is as follows. Involved in ammonia regulation of the GAP1 permease. This is Ammonia regulation of amino acid uptake protein (AUA1) from Saccharomyces cerevisiae (strain ATCC 204508 / S288c) (Baker's yeast).